Here is a 165-residue protein sequence, read N- to C-terminus: Large ribosomal subunit protein uL10 (165 aa).

It belongs to the universal ribosomal protein uL10 family. In terms of assembly, part of the ribosomal stalk of the 50S ribosomal subunit. The N-terminus interacts with L11 and the large rRNA to form the base of the stalk. The C-terminus forms an elongated spine to which L12 dimers bind in a sequential fashion forming a multimeric L10(L12)X complex.

In terms of biological role, forms part of the ribosomal stalk, playing a central role in the interaction of the ribosome with GTP-bound translation factors. The chain is Large ribosomal subunit protein uL10 from Serratia proteamaculans (strain 568).